The primary structure comprises 773 residues: Angiomotin-like protein 2 (773 aa).

Disordered stretches follow at residues G41–S157, R169–F238, and Q259–M309. Composition is skewed to basic and acidic residues over residues Q80 to L91, K100 to A112, and R141 to H152. The interval G101 to G302 is required for interaction with CDH5. Position 107 is a phosphotyrosine; by FGFR1 (Y107). The segment covering H177–S190 has biased composition (polar residues). Residues P196–Y213 show a composition bias toward pro residues. The tract at residues Q220–G302 is required for interaction with CDH1. The stretch at A304–Q577 forms a coiled coil. Residues K342 and K403 each participate in a glycyl lysine isopeptide (Lys-Gly) (interchain with G-Cter in ubiquitin) cross-link. 2 disordered regions span residues Q589–L611 and W677–L754. A compositionally biased stretch (pro residues) spans E701–P710. A compositionally biased stretch (polar residues) spans D719–C734. S753 and S756 each carry phosphoserine. The PDZ-binding motif lies at E770–I773.

It belongs to the angiomotin family. As to quaternary structure, part of a complex composed of AMOTL2, MAGI1 and CDH5, within the complex AMOTL2 acts as a scaffold protein for the interaction of MAGI1 with CDH5. The complex is required for coupling actin fibers to cell junctions in endothelial cells. Within the complex AMOTL2 (via its N-terminus) interacts with CDH5. Interacts (via N-terminus) with MAGI1. Interacts (via N-terminus) with ACTB; the interaction facilitates binding of cell junction complexes to actin fibers in endothelial cells. Interacts with CDH1; the interaction may facilitate binding of radial actin fibers to cell junction complexes. Interacts with SRC. Interacts with YAP1; the interaction is required for ubiquitination of AMOTL2 and localization of YAP1 to tight junctions. Interacts with WWP1; the interaction facilitates WWP1 interaction with the Crumbs complex and subsequent WWP1 translocation to the plasma membrane. WWP1 interaction with the Crumbs complex promotes WWP1 monoubiquitination of AMOTL2 which subsequently activates the Hippo signaling pathway. When ubiquitinated interacts with LATS2 (via UBA domain); the interaction promotes LATS2 phosphorylation of YAP1. Interacts (via PPXY motif) with WWTR1/TAZ (via WW domain); the interaction promotes WWTR1/TAZ localization to the cytoplasm and thereby inhibition of its transcriptional properties. Interacts with PHLDB2; interaction may facilitate PHLDB2 localization to the myotube podosome cortex that surrounds the core. In terms of processing, monoubiquitinated at Lys-342 and Lys-403 by Crumbs complex-bound WWP1. De-ubiquitinated at Lys-342 and Lys-403 by USP9X; the interaction may be promoted by cell contact inhibition. Deubiquitination of AMOTL2 negatively regulates Hippo signaling activation. Post-translationally, phosphorylation at Tyr-107 is necessary for efficient binding to SRC and synergistically functioning with SRC to activate the downstream MAPK pathway.

Its subcellular location is the recycling endosome. The protein localises to the cytoplasm. It is found in the cell projection. The protein resides in the podosome. It localises to the cell junction. Regulates the translocation of phosphorylated SRC to peripheral cell-matrix adhesion sites. Required for proper architecture of actin filaments. Plays a role in coupling actin fibers to cell junctions in endothelial cells and is therefore required for correct endothelial cell morphology via facilitating transcellular transmission of mechanical force resulting in endothelial cell elongation. Required for the anchoring of radial actin fibers to CDH1 junction complexes at the cell membrane which facilitates organization of radial actin fiber structure and cellular response to contractile forces. This contributes to maintenance of cell area, size, shape, epithelial sheet organization and trophectoderm cell properties that facilitate blastocyst zona hatching. Inhibits the Wnt/beta-catenin signaling pathway, probably by recruiting CTNNB1 to recycling endosomes and hence preventing its translocation to the nucleus. Participates in angiogenesis. Activates the Hippo signaling pathway in response to cell contact inhibition via interaction with and ubiquitination by Crumbs complex-bound WWP1. Ubiquitinated AMOTL2 then interacts with LATS2 which in turn phosphorylates YAP1, excluding it from the nucleus and localizing it to the cytoplasm and tight junctions, therefore ultimately repressing YAP1-driven transcription of target genes. Acts to inhibit WWTR1/TAZ transcriptional coactivator activity via sequestering WWTR1/TAZ in the cytoplasm and at tight junctions. Regulates the size and protein composition of the podosome cortex and core at myofibril neuromuscular junctions. Selectively promotes FGF-induced MAPK activation through SRC. May play a role in the polarity, proliferation and migration of endothelial cells. This chain is Angiomotin-like protein 2, found in Rattus norvegicus (Rat).